The following is a 188-amino-acid chain: Cytochrome b-245 chaperone 1 homolog (188 aa).

Residues S20 to T42 form a helical membrane-spanning segment.

It belongs to the CYBC1 family.

It is found in the endoplasmic reticulum membrane. In terms of biological role, functions as a chaperone necessary for a stable expression of the CYBA and CYBB subunits of the cytochrome b-245 heterodimer. This chain is Cytochrome b-245 chaperone 1 homolog (cybc1), found in Xenopus tropicalis (Western clawed frog).